The primary structure comprises 397 residues: Argininosuccinate synthase (397 aa).

8 to 16 provides a ligand contact to ATP; that stretch reads AYSGGLDTS. 2 residues coordinate L-citrulline: Tyr86 and Ser91. Gly116 serves as a coordination point for ATP. The L-aspartate site is built by Thr118, Asn122, and Asp123. Asn122 serves as a coordination point for L-citrulline. Residues Arg126, Ser175, Ser184, Glu260, and Tyr272 each coordinate L-citrulline.

The protein belongs to the argininosuccinate synthase family. Type 1 subfamily. As to quaternary structure, homotetramer.

The protein resides in the cytoplasm. The enzyme catalyses L-citrulline + L-aspartate + ATP = 2-(N(omega)-L-arginino)succinate + AMP + diphosphate + H(+). The protein operates within amino-acid biosynthesis; L-arginine biosynthesis; L-arginine from L-ornithine and carbamoyl phosphate: step 2/3. The polypeptide is Argininosuccinate synthase (Clostridium botulinum (strain Langeland / NCTC 10281 / Type F)).